A 563-amino-acid chain; its full sequence is Arginine--tRNA ligase (563 aa).

A 'HIGH' region motif is present at residues 122–132; that stretch reads PNIAKPMSMGH.

It belongs to the class-I aminoacyl-tRNA synthetase family. Monomer.

Its subcellular location is the cytoplasm. The enzyme catalyses tRNA(Arg) + L-arginine + ATP = L-arginyl-tRNA(Arg) + AMP + diphosphate. The chain is Arginine--tRNA ligase from Levilactobacillus brevis (strain ATCC 367 / BCRC 12310 / CIP 105137 / JCM 1170 / LMG 11437 / NCIMB 947 / NCTC 947) (Lactobacillus brevis).